The chain runs to 865 residues: Outer membrane usher protein HtrE (865 aa).

The signal sequence occupies residues methionine 1 to serine 29. A disulfide bridge connects residues cysteine 838 and cysteine 862.

It belongs to the fimbrial export usher family.

It is found in the cell outer membrane. Its function is as follows. Part of the yadCKLM-htrE-yadVN fimbrial operon. Could contribute to adhesion to various surfaces in specific environmental niches. Probably involved in the export and assembly of fimbrial subunits across the outer membrane. The chain is Outer membrane usher protein HtrE (htrE) from Escherichia coli (strain K12).